We begin with the raw amino-acid sequence, 358 residues long: 3-isopropylmalate dehydrogenase (358 aa).

Substrate contacts are provided by Arg92, Arg102, Arg130, and Asp224. Mg(2+)-binding residues include Asp224, Asp248, and Asp252. NAD(+) is bound at residue 282–294 (GSAPDIAGQGIAN).

This sequence belongs to the isocitrate and isopropylmalate dehydrogenases family. LeuB type 1 subfamily. As to quaternary structure, homodimer. The cofactor is Mg(2+). It depends on Mn(2+) as a cofactor.

Its subcellular location is the cytoplasm. It carries out the reaction (2R,3S)-3-isopropylmalate + NAD(+) = 4-methyl-2-oxopentanoate + CO2 + NADH. The protein operates within amino-acid biosynthesis; L-leucine biosynthesis; L-leucine from 3-methyl-2-oxobutanoate: step 3/4. In terms of biological role, catalyzes the oxidation of 3-carboxy-2-hydroxy-4-methylpentanoate (3-isopropylmalate) to 3-carboxy-4-methyl-2-oxopentanoate. The product decarboxylates to 4-methyl-2 oxopentanoate. The sequence is that of 3-isopropylmalate dehydrogenase from Bordetella avium (strain 197N).